A 753-amino-acid chain; its full sequence is 5-methyltetrahydropteroyltriglutamate--homocysteine methyltransferase (753 aa).

Residues 17 to 20 (RELK) and lysine 117 contribute to the 5-methyltetrahydropteroyltri-L-glutamate site. Residues 431–433 (IGS) and glutamate 484 contribute to the L-homocysteine site. L-methionine-binding positions include 431-433 (IGS) and glutamate 484. Residues 515-516 (RC) and tryptophan 561 contribute to the 5-methyltetrahydropteroyltri-L-glutamate site. Aspartate 599 serves as a coordination point for L-homocysteine. Aspartate 599 lines the L-methionine pocket. Glutamate 605 contributes to the 5-methyltetrahydropteroyltri-L-glutamate binding site. Residues histidine 641, cysteine 643, and glutamate 665 each contribute to the Zn(2+) site. The active-site Proton donor is the histidine 694. Cysteine 726 contributes to the Zn(2+) binding site.

This sequence belongs to the vitamin-B12 independent methionine synthase family. Requires Zn(2+) as cofactor.

The enzyme catalyses 5-methyltetrahydropteroyltri-L-glutamate + L-homocysteine = tetrahydropteroyltri-L-glutamate + L-methionine. The protein operates within amino-acid biosynthesis; L-methionine biosynthesis via de novo pathway; L-methionine from L-homocysteine (MetE route): step 1/1. In terms of biological role, catalyzes the transfer of a methyl group from 5-methyltetrahydrofolate to homocysteine resulting in methionine formation. The protein is 5-methyltetrahydropteroyltriglutamate--homocysteine methyltransferase of Klebsiella pneumoniae (strain 342).